The primary structure comprises 208 residues: Uracil phosphoribosyltransferase (208 aa).

5-phospho-alpha-D-ribose 1-diphosphate-binding positions include R78, R103, and 130–138 (DPMLATGGT). Residues I193 and 198–200 (GDA) each bind uracil. A 5-phospho-alpha-D-ribose 1-diphosphate-binding site is contributed by D199.

This sequence belongs to the UPRTase family. The cofactor is Mg(2+).

It carries out the reaction UMP + diphosphate = 5-phospho-alpha-D-ribose 1-diphosphate + uracil. Its pathway is pyrimidine metabolism; UMP biosynthesis via salvage pathway; UMP from uracil: step 1/1. Its activity is regulated as follows. Allosterically activated by GTP. Functionally, catalyzes the conversion of uracil and 5-phospho-alpha-D-ribose 1-diphosphate (PRPP) to UMP and diphosphate. This is Uracil phosphoribosyltransferase from Nitratidesulfovibrio vulgaris (strain ATCC 29579 / DSM 644 / CCUG 34227 / NCIMB 8303 / VKM B-1760 / Hildenborough) (Desulfovibrio vulgaris).